The primary structure comprises 340 residues: tRNA N6-adenosine threonylcarbamoyltransferase (340 aa).

Positions 113 and 117 each coordinate Fe cation. Residues 135–139 (LVSGG), D169, G182, D186, and N274 each bind substrate. Position 302 (D302) interacts with Fe cation.

This sequence belongs to the KAE1 / TsaD family. It depends on Fe(2+) as a cofactor.

It is found in the cytoplasm. It carries out the reaction L-threonylcarbamoyladenylate + adenosine(37) in tRNA = N(6)-L-threonylcarbamoyladenosine(37) in tRNA + AMP + H(+). In terms of biological role, required for the formation of a threonylcarbamoyl group on adenosine at position 37 (t(6)A37) in tRNAs that read codons beginning with adenine. Is involved in the transfer of the threonylcarbamoyl moiety of threonylcarbamoyl-AMP (TC-AMP) to the N6 group of A37, together with TsaE and TsaB. TsaD likely plays a direct catalytic role in this reaction. This Mycolicibacterium gilvum (strain PYR-GCK) (Mycobacterium gilvum (strain PYR-GCK)) protein is tRNA N6-adenosine threonylcarbamoyltransferase.